We begin with the raw amino-acid sequence, 176 residues long: Protein FAM89A (176 aa).

Residues 140-165 (DFQEQGSLRDGQGRGSPGDPSLPLTH) are disordered.

The protein belongs to the FAM89 family.

The sequence is that of Protein FAM89A (Fam89a) from Rattus norvegicus (Rat).